Here is a 296-residue protein sequence, read N- to C-terminus: Fructose-bisphosphate aldolase class 1 (296 aa).

Glu-175 acts as the Proton acceptor in catalysis. Lys-212 (schiff-base intermediate with dihydroxyacetone-P) is an active-site residue.

Belongs to the class I fructose-bisphosphate aldolase family.

The enzyme catalyses beta-D-fructose 1,6-bisphosphate = D-glyceraldehyde 3-phosphate + dihydroxyacetone phosphate. The protein operates within carbohydrate degradation; glycolysis; D-glyceraldehyde 3-phosphate and glycerone phosphate from D-glucose: step 4/4. The protein is Fructose-bisphosphate aldolase class 1 (fda) of Staphylococcus epidermidis (strain ATCC 12228 / FDA PCI 1200).